The chain runs to 144 residues: Endoribonuclease YbeY (144 aa).

The Zn(2+) site is built by H105, H109, and D115.

The protein belongs to the endoribonuclease YbeY family. Requires Zn(2+) as cofactor.

Its subcellular location is the cytoplasm. Functionally, single strand-specific metallo-endoribonuclease involved in late-stage 70S ribosome quality control and in maturation of the 3' terminus of the 16S rRNA. This is Endoribonuclease YbeY from Chlorobium limicola (strain DSM 245 / NBRC 103803 / 6330).